Here is a 393-residue protein sequence, read N- to C-terminus: MAKESYKRDKPHVNIGTIGHVDHGKTTLTAAITSVLAKQGLAQQRDFGSIDKAPEERERGITISTAHVEYQTKKRHYAHIDCPGHADYIKNMITGAAQMDGAILVVAGTDGPMPQTREHILLARQVNVPALVVYLNKVDIADPELIELVELELRELLTEYNFPGDDIPIIKGSALKALDGDLEGEKSIMELMDAVDEFIPEPLRDIDKPFLMPVEDVFSISGRGTVGTGRIERGRIKINEEVEIVGIKPTRKSVVTGIEMFQKLLDEGQAGDNAGLLLRGVDKTELERGMVIAKPGTIKPHTKFKAEVYILRKEEGGRHTPFFNGYRPQFYFRTTDVTGSVTLPEGVEMVMPGDNLSVDVELIVPIAMDENLRFAIREGGRTVGAGSVTKIIE.

The 194-residue stretch at 10–203 (KPHVNIGTIG…AVDEFIPEPL (194 aa)) folds into the tr-type G domain. Residues 19-26 (GHVDHGKT) are G1. 19–26 (GHVDHGKT) serves as a coordination point for GTP. Thr26 is a binding site for Mg(2+). Residues 60-64 (GITIS) form a G2 region. Positions 81 to 84 (DCPG) are G3. GTP-binding positions include 81-85 (DCPGH) and 136-139 (NKVD). The segment at 136–139 (NKVD) is G4. The segment at 173 to 175 (SAL) is G5.

Belongs to the TRAFAC class translation factor GTPase superfamily. Classic translation factor GTPase family. EF-Tu/EF-1A subfamily. In terms of assembly, monomer.

Its subcellular location is the cytoplasm. The catalysed reaction is GTP + H2O = GDP + phosphate + H(+). Functionally, GTP hydrolase that promotes the GTP-dependent binding of aminoacyl-tRNA to the A-site of ribosomes during protein biosynthesis. This Chlorobium phaeobacteroides (strain DSM 266 / SMG 266 / 2430) protein is Elongation factor Tu.